Consider the following 150-residue polypeptide: MDLSNLKPAEGSVRKNSKRIGRGEGSGKGGTATRGHKGAKSRSGYSKKIGFEGGQMPLQRRVPKFGFTNRNRKVYQGINLDTLQNLVDEGRIKDTVDMDVLVENGLAGRNELVKILGRGELKAKLKISVHKFTASAKEAIEAAGGEVVTL.

Residues 1-52 are disordered; that stretch reads MDLSNLKPAEGSVRKNSKRIGRGEGSGKGGTATRGHKGAKSRSGYSKKIGFE. The segment covering 23–32 has biased composition (gly residues); it reads GEGSGKGGTA.

Belongs to the universal ribosomal protein uL15 family. Part of the 50S ribosomal subunit.

In terms of biological role, binds to the 23S rRNA. The protein is Large ribosomal subunit protein uL15 of Christiangramia forsetii (strain DSM 17595 / CGMCC 1.15422 / KT0803) (Gramella forsetii).